A 329-amino-acid chain; its full sequence is DNA repair and recombination protein RadA (329 aa).

107-114 (GEFGSGKS) provides a ligand contact to ATP.

It belongs to the eukaryotic RecA-like protein family.

Its function is as follows. Involved in DNA repair and in homologous recombination. Binds and assemble on single-stranded DNA to form a nucleoprotein filament. Hydrolyzes ATP in a ssDNA-dependent manner and promotes DNA strand exchange between homologous DNA molecules. This chain is DNA repair and recombination protein RadA, found in Methanocorpusculum labreanum (strain ATCC 43576 / DSM 4855 / Z).